An 88-amino-acid polypeptide reads, in one-letter code: Small ribosomal subunit protein bS16 (88 aa).

Belongs to the bacterial ribosomal protein bS16 family.

The chain is Small ribosomal subunit protein bS16 from Buchnera aphidicola subsp. Cinara cedri (strain Cc).